The chain runs to 326 residues: Probable iron chelatin transport system permease protein HP_0889 (326 aa).

Helical transmembrane passes span 7–27 (IALA…ESLS), 64–84 (ILAL…QTIF), 91–111 (PFLL…IAVV), 113–133 (SNIA…VLAM), 142–162 (LSLV…AGAI), 164–184 (FFVI…SLSL), 187–207 (YKDC…LFLL), 241–261 (VASA…LVIP), 275–295 (LLLS…VVAK), and 301–321 (DLPV…WLLF).

The protein belongs to the binding-protein-dependent transport system permease family. FecCD subfamily.

It localises to the cell inner membrane. Part of a binding-protein-dependent transport system for an iron chelatin; probably responsible for the translocation of the substrate across the membrane. This is Probable iron chelatin transport system permease protein HP_0889 from Helicobacter pylori (strain ATCC 700392 / 26695) (Campylobacter pylori).